The following is a 383-amino-acid chain: Probable endopolygalacturonase C (383 aa).

Residues 1 to 16 (MVRQLILISSLLAAVA) form the signal peptide. Residues 17 to 40 (VRAPADPAHPMVTEAPDVNLVEKR) constitute a propeptide that is removed on maturation. An intrachain disulfide couples C44 to C62. PbH1 repeat units lie at residues 175–206 (STDL…DIGE) and 207–228 (STYI…AINS). D221 serves as the catalytic Proton donor. C223 and C239 are oxidised to a cystine. H243 is an active-site residue. 2 PbH1 repeats span residues 253-279 (RDDN…RIKT) and 287-309 (VSEV…VIEQ). N-linked (GlcNAc...) asparagine glycosylation is present at N260. Disulfide bonds link C348–C353 and C372–C381.

Belongs to the glycosyl hydrolase 28 family.

The protein resides in the secreted. The enzyme catalyses (1,4-alpha-D-galacturonosyl)n+m + H2O = (1,4-alpha-D-galacturonosyl)n + (1,4-alpha-D-galacturonosyl)m.. Involved in maceration and soft-rotting of plant tissue. Hydrolyzes the 1,4-alpha glycosidic bonds of de-esterified pectate in the smooth region of the plant cell wall. The sequence is that of Probable endopolygalacturonase C (pgaC) from Aspergillus niger.